Here is a 1912-residue protein sequence, read N- to C-terminus: Vitellogenin-1 (1912 aa).

The first 15 residues, 1–15 (MRGLISALVLTLVGS), serve as a signal peptide directing secretion. One can recognise a Vitellogenin domain in the interval 24–663 (FGENKVYTYN…AGSLIPTMAV (640 aa)). Residue Asn163 is glycosylated (N-linked (GlcNAc...) asparagine). The segment at 948 to 972 (DSASGETDNIRDRQSVEDVSSGNSF) is disordered. N-linked (GlcNAc...) asparagine glycosylation occurs at Asn991. Disordered stretches follow at residues 1080–1329 (KILD…SYDI) and 1351–1432 (HWHS…RERN). Low complexity-rich tracts occupy residues 1092–1124 (NSRS…NRAS) and 1150–1235 (SSSS…SSSK). N-linked (GlcNAc...) asparagine glycosylation is present at Asn1206. The segment covering 1259 to 1269 (EGERSVHEQKQ) has biased composition (basic and acidic residues). Low complexity predominate over residues 1273 to 1299 (SSSSSSSRASSNSRSTSSSTSSSSESS). Basic and acidic residues predominate over residues 1306-1316 (WKQDREAETKR). A compositionally biased stretch (polar residues) spans 1319–1328 (SQFNSHSSYD). A compositionally biased stretch (low complexity) spans 1357 to 1381 (RTSSSSSSSSSESGSSHSNSSSSDS). N-linked (GlcNAc...) asparagine glycosylation occurs at Asn1375. The segment covering 1397 to 1409 (SHRHGEKAAHSSR) has biased composition (basic residues). A VWFD domain is found at 1640 to 1818 (STCEVSKGDF…SWVLLEETCS (179 aa)). 2 cysteine pairs are disulfide-bonded: Cys1642–Cys1781 and Cys1665–Cys1817. N-linked (GlcNAc...) asparagine glycosylation is found at Asn1662, Asn1698, and Asn1703.

Post-translationally, phosvitin, an egg yolk storage protein, is one of the most highly phosphorylated (10%) proteins in nature. In terms of processing, cathepsin D is responsible for intraoocytic processing of vitellogenin. May contain intrachain disulfide bonds. Produced by the liver, secreted into the blood and then sequestered by receptor mediated endocytosis into growing oocytes, where it is generally cleaved, giving rise to the respective yolk components.

In terms of biological role, precursor of the egg-yolk proteins that are sources of nutrients during early development of oviparous organisms. Its function is as follows. Phosvitin is believed to be of importance in sequestering calcium, iron and other cations for the developing embryo. The chain is Vitellogenin-1 (VTG1) from Gallus gallus (Chicken).